Here is a 559-residue protein sequence, read N- to C-terminus: Potassium-transporting ATPase potassium-binding subunit (559 aa).

12 helical membrane-spanning segments follow: residues 6–26, 63–83, 131–151, 173–193, 253–273, 283–303, 327–347, 356–376, 379–399, 416–436, 484–504, and 524–544; these read FLLI…LGNV, LLAI…MLML, VGLT…IFAL, ITLW…IQQG, FVQM…FGDV, LLWA…WAEW, FGIL…CGAV, ALGG…FGGV, GLYG…LMIG, LTAL…ALAL, LLAF…MAIA, and GALF…LTFI.

Belongs to the KdpA family. In terms of assembly, the system is composed of three essential subunits: KdpA, KdpB and KdpC.

It is found in the cell inner membrane. Its function is as follows. Part of the high-affinity ATP-driven potassium transport (or Kdp) system, which catalyzes the hydrolysis of ATP coupled with the electrogenic transport of potassium into the cytoplasm. This subunit binds the periplasmic potassium ions and delivers the ions to the membrane domain of KdpB through an intramembrane tunnel. This is Potassium-transporting ATPase potassium-binding subunit from Enterobacter sp. (strain 638).